A 91-amino-acid polypeptide reads, in one-letter code: uncharacterized protein (91 aa).

The chain crosses the membrane as a helical span at residues 12–34 (FAIVYANITFLFYYLLDFTLPFH).

It is found in the membrane. This is an uncharacterized protein from Saccharomyces cerevisiae (strain ATCC 204508 / S288c) (Baker's yeast).